A 257-amino-acid polypeptide reads, in one-letter code: Glutamate racemase (257 aa).

Substrate contacts are provided by residues Asp-12–Ser-13 and Tyr-44–Gly-45. Cys-75 serves as the catalytic Proton donor/acceptor. Asn-76–Thr-77 serves as a coordination point for substrate. Cys-185 functions as the Proton donor/acceptor in the catalytic mechanism. Residue Thr-186–His-187 coordinates substrate.

This sequence belongs to the aspartate/glutamate racemases family.

It catalyses the reaction L-glutamate = D-glutamate. Its pathway is cell wall biogenesis; peptidoglycan biosynthesis. Its function is as follows. Provides the (R)-glutamate required for cell wall biosynthesis. In Clostridium botulinum (strain Okra / Type B1), this protein is Glutamate racemase.